Reading from the N-terminus, the 424-residue chain is Ornithine aminotransferase (424 aa).

Lys272 bears the N6-(pyridoxal phosphate)lysine mark. Lys390 is covalently cross-linked (Glycyl lysine isopeptide (Lys-Gly) (interchain with G-Cter in ubiquitin)).

This sequence belongs to the class-III pyridoxal-phosphate-dependent aminotransferase family. It depends on pyridoxal 5'-phosphate as a cofactor.

It localises to the cytoplasm. It catalyses the reaction a 2-oxocarboxylate + L-ornithine = L-glutamate 5-semialdehyde + an L-alpha-amino acid. It functions in the pathway amino-acid biosynthesis; L-proline biosynthesis; L-glutamate 5-semialdehyde from L-ornithine: step 1/1. By arginine and urea. Catalyzes the transamination of ornithine into L-glutamate gamma-semialdehyde, the second step of arginine degradation. The polypeptide is Ornithine aminotransferase (CAR2) (Saccharomyces cerevisiae (strain ATCC 204508 / S288c) (Baker's yeast)).